A 255-amino-acid chain; its full sequence is Pimeloyl-[acyl-carrier protein] methyl ester esterase (255 aa).

Substrate contacts are provided by residues tryptophan 18, 78–79, and 139–143; these read SL and FLALD. Serine 78 functions as the Nucleophile in the catalytic mechanism. Active-site residues include aspartate 203 and histidine 233. Histidine 233 serves as a coordination point for substrate.

Belongs to the AB hydrolase superfamily. Carboxylesterase BioH family. Monomer.

The protein localises to the cytoplasm. The enzyme catalyses 6-carboxyhexanoyl-[ACP] methyl ester + H2O = 6-carboxyhexanoyl-[ACP] + methanol + H(+). It participates in cofactor biosynthesis; biotin biosynthesis. Its function is as follows. The physiological role of BioH is to remove the methyl group introduced by BioC when the pimeloyl moiety is complete. It allows to synthesize pimeloyl-ACP via the fatty acid synthetic pathway through the hydrolysis of the ester bonds of pimeloyl-ACP esters. The chain is Pimeloyl-[acyl-carrier protein] methyl ester esterase from Xylella fastidiosa (strain 9a5c).